The following is a 224-amino-acid chain: Ribonuclease 3 (224 aa).

The 123-residue stretch at 5 to 127 (LERLCRRLNY…ILAAIYLDGG (123 aa)) folds into the RNase III domain. Glu-40 is a binding site for Mg(2+). The active site involves Asp-44. The Mg(2+) site is built by Asp-113 and Glu-116. Residue Glu-116 is part of the active site. One can recognise a DRBM domain in the interval 154-224 (DAKTQLQEFL…AKAMLEQLQG (71 aa)).

Belongs to the ribonuclease III family. As to quaternary structure, homodimer. Requires Mg(2+) as cofactor.

It localises to the cytoplasm. It carries out the reaction Endonucleolytic cleavage to 5'-phosphomonoester.. Digests double-stranded RNA. Involved in the processing of primary rRNA transcript to yield the immediate precursors to the large and small rRNAs (23S and 16S). Processes some mRNAs, and tRNAs when they are encoded in the rRNA operon. Processes pre-crRNA and tracrRNA of type II CRISPR loci if present in the organism. The chain is Ribonuclease 3 from Legionella pneumophila (strain Paris).